The sequence spans 660 residues: Acetyl-coenzyme A synthetase (660 aa).

CoA-binding positions include 197–200 and threonine 317; that span reads RGGK. ATP-binding positions include 397–399, 421–426, aspartate 512, and arginine 528; these read GEP and DTFWQT. Serine 536 contacts CoA. Arginine 539 provides a ligand contact to ATP. Mg(2+)-binding residues include valine 550 and valine 555. Lysine 625 is modified (N6-acetyllysine).

Belongs to the ATP-dependent AMP-binding enzyme family. Requires Mg(2+) as cofactor. In terms of processing, acetylated. Deacetylation by the SIR2-homolog deacetylase activates the enzyme.

The catalysed reaction is acetate + ATP + CoA = acetyl-CoA + AMP + diphosphate. In terms of biological role, catalyzes the conversion of acetate into acetyl-CoA (AcCoA), an essential intermediate at the junction of anabolic and catabolic pathways. AcsA undergoes a two-step reaction. In the first half reaction, AcsA combines acetate with ATP to form acetyl-adenylate (AcAMP) intermediate. In the second half reaction, it can then transfer the acetyl group from AcAMP to the sulfhydryl group of CoA, forming the product AcCoA. The sequence is that of Acetyl-coenzyme A synthetase from Cupriavidus pinatubonensis (strain JMP 134 / LMG 1197) (Cupriavidus necator (strain JMP 134)).